Reading from the N-terminus, the 378-residue chain is TelA-like protein SAB1262 (378 aa).

The protein belongs to the TelA family.

This chain is TelA-like protein SAB1262, found in Staphylococcus aureus (strain bovine RF122 / ET3-1).